The sequence spans 483 residues: UDP-N-acetylmuramoylalanine--D-glutamate ligase (483 aa).

ATP is bound at residue 119–125 (GTNGKTT).

The protein belongs to the MurCDEF family.

Its subcellular location is the cytoplasm. The catalysed reaction is UDP-N-acetyl-alpha-D-muramoyl-L-alanine + D-glutamate + ATP = UDP-N-acetyl-alpha-D-muramoyl-L-alanyl-D-glutamate + ADP + phosphate + H(+). Its pathway is cell wall biogenesis; peptidoglycan biosynthesis. Cell wall formation. Catalyzes the addition of glutamate to the nucleotide precursor UDP-N-acetylmuramoyl-L-alanine (UMA). This is UDP-N-acetylmuramoylalanine--D-glutamate ligase from Mycolicibacterium vanbaalenii (strain DSM 7251 / JCM 13017 / BCRC 16820 / KCTC 9966 / NRRL B-24157 / PYR-1) (Mycobacterium vanbaalenii).